Reading from the N-terminus, the 611-residue chain is Zinc metalloproteinase-disintegrin-like MTP9 (611 aa).

Positions 1 to 20 are cleaved as a signal peptide; that stretch reads MIEVLLVTICFTVFPYQGSS. Positions 21-191 are excised as a propeptide; the sequence is IILESGNVND…DEPIEKISQL (171 aa). In terms of domain architecture, Peptidase M12B spans 205–401; the sequence is KYIELYVVVD…VRPQCILNKP (197 aa). Glu208 contributes to the Ca(2+) binding site. Asn282 is a glycosylation site (N-linked (GlcNAc...) asparagine). Asp292 contacts Ca(2+). Intrachain disulfides connect Cys316–Cys396, Cys356–Cys380, and Cys358–Cys363. 3 residues coordinate Zn(2+): His341, His345, and His351. Ca(2+)-binding residues include Cys396, Asn399, Asn414, Phe416, Glu418, Glu421, and Asp424. Positions 409 to 493 constitute a Disintegrin domain; sequence PPVCGNYFVE…ECPTDSFQRN (85 aa). Intrachain disulfides connect Cys412/Cys441, Cys423/Cys436, Cys425/Cys431, Cys435/Cys456, Cys447/Cys453, Cys452/Cys478, Cys465/Cys485, Cys472/Cys504, Cys497/Cys509, Cys516/Cys566, Cys531/Cys573, Cys541/Cys575, Cys544/Cys554, Cys561/Cys599, and Cys593/Cys604. The D/ECD-tripeptide motif lies at 471–473; sequence DCD. Ca(2+)-binding residues include Asp473, Leu474, Glu476, and Asp488. N-linked (GlcNAc...) asparagine glycans are attached at residues Asn548 and Asn570.

This sequence belongs to the venom metalloproteinase (M12B) family. P-III subfamily. Monomer. The cofactor is Zn(2+). As to expression, expressed by the venom gland.

It localises to the secreted. Snake venom zinc metalloproteinase that may impair hemostasis in the prey. The chain is Zinc metalloproteinase-disintegrin-like MTP9 from Drysdalia coronoides (White-lipped snake).